The chain runs to 94 residues: Large ribosomal subunit protein bL27 (94 aa).

A propeptide spanning residues 1 to 10 (MQFLFNIQLF) is cleaved from the precursor.

This sequence belongs to the bacterial ribosomal protein bL27 family. In terms of processing, the N-terminus is cleaved by ribosomal processing cysteine protease Prp.

The protein is Large ribosomal subunit protein bL27 of Fusobacterium nucleatum subsp. nucleatum (strain ATCC 25586 / DSM 15643 / BCRC 10681 / CIP 101130 / JCM 8532 / KCTC 2640 / LMG 13131 / VPI 4355).